The sequence spans 116 residues: Large ribosomal subunit protein uL18 (116 aa).

Belongs to the universal ribosomal protein uL18 family. Part of the 50S ribosomal subunit; part of the 5S rRNA/L5/L18/L25 subcomplex. Contacts the 5S and 23S rRNAs.

This is one of the proteins that bind and probably mediate the attachment of the 5S RNA into the large ribosomal subunit, where it forms part of the central protuberance. The sequence is that of Large ribosomal subunit protein uL18 from Ectopseudomonas mendocina (strain ymp) (Pseudomonas mendocina).